Reading from the N-terminus, the 347-residue chain is Nicotinate-nucleotide--dimethylbenzimidazole phosphoribosyltransferase (347 aa).

Glu316 functions as the Proton acceptor in the catalytic mechanism.

It belongs to the CobT family.

The enzyme catalyses 5,6-dimethylbenzimidazole + nicotinate beta-D-ribonucleotide = alpha-ribazole 5'-phosphate + nicotinate + H(+). The protein operates within nucleoside biosynthesis; alpha-ribazole biosynthesis; alpha-ribazole from 5,6-dimethylbenzimidazole: step 1/2. In terms of biological role, catalyzes the synthesis of alpha-ribazole-5'-phosphate from nicotinate mononucleotide (NAMN) and 5,6-dimethylbenzimidazole (DMB). The sequence is that of Nicotinate-nucleotide--dimethylbenzimidazole phosphoribosyltransferase from Vibrio parahaemolyticus serotype O3:K6 (strain RIMD 2210633).